The chain runs to 430 residues: MPVTTPTKMATLTTKQMWQTIKDYFGDGFVTGSAPISYNVHTCDMQLQPDSGIHAASDGIHYGVQISEDSMPLFSIMGDTAAPPCTCHRVDEIVKHIDEFLERAPEALPDDGAITSGKPCDTNPDQVSLYAMRDSLSWWVHWGGNLRPEHYWKQIYIGFAAIPDDVQISPREFLDGTYRYLGHTWDDCLSGLEEEGVSPDEIEFANMCMWRQMLTQWLEKADPELLPLLKGKISLMLQYRVLTANTLGCLALFMNATADPKDGPIHYADSSYEMEIASVAQCVTLDMAKEAMGILQGERTEVVAGDRAQRKRELRWIYVRCMQILESQPHAHMLRRYGSAGLHYVPMMDRYLERVSGHTRFPIRDGAARILERFINRAELPKESEDINPNGRSLKVSAKMNGNGQLHHEVNGNAKLHLEAERPDVTTAVG.

This sequence belongs to the terpene synthase family. Alpha-humulene synthase eupE subfamily. Mg(2+) serves as cofactor.

It catalyses the reaction (2E,6E)-farnesyl diphosphate = alpha-humulene + diphosphate. It participates in secondary metabolite biosynthesis; terpenoid biosynthesis. Its function is as follows. Alpha-humulene synthase; part of the gene cluster that mediates the biosynthesis of xenovulene A, an unusual meroterpenoid that has potent inhibitory effects on the human gamma-aminobutyrate A (GABAA) benzodiazepine receptor. The first step of xenovulene A biosynthesis is the biosynthesis of 3-methylorcinaldehyde performed by the non-reducing polyketide synthase aspks1. The salicylate hydroxylase asL1 then catalyzes the oxidative dearomatization of 3-methylorcinaldehyde to yield a dearomatized hydroxycyclohexadione. The 2-oxoglutarate-dependent dioxygenase asL3 further catalyzes the oxidative ring expansion to provide the first tropolone metabolite. The cytochrome P450 monooxygenase asR2 allows the synthesis of tropolone hemiacetal. In parallel, a previously unrecognised class of terpene cyclase, asR6, produces alpha-humulene from farnesylpyrophosphate (FPP). The putative Diels-Alderase asR5 probably catalyzes the formation of the tropolone-humulene skeleton by linking humulene and the polyketide moiety. Oxidative-ring contractions catalyzed by asL4 and asL6 then processively remove carbon atoms from the polyketide to yield xenovulene A. The chain is Alpha-humulene synthase asR6 from Sarocladium schorii (Acremonium strictum (strain IMI 501407)).